Reading from the N-terminus, the 292-residue chain is N-acetylneuraminate lyase (292 aa).

2 residues coordinate aceneuramate: Ser-47 and Thr-48. Catalysis depends on Tyr-136, which acts as the Proton donor. The Schiff-base intermediate with substrate role is filled by Lys-164. Residues Thr-166, Gly-188, Asp-190, Glu-191, and Ser-207 each coordinate aceneuramate.

It belongs to the DapA family. NanA subfamily. As to quaternary structure, homotetramer.

The protein resides in the cytoplasm. The enzyme catalyses aceneuramate = aldehydo-N-acetyl-D-mannosamine + pyruvate. The protein operates within amino-sugar metabolism; N-acetylneuraminate degradation; D-fructose 6-phosphate from N-acetylneuraminate: step 1/5. Its function is as follows. Catalyzes the reversible aldol cleavage of N-acetylneuraminic acid (sialic acid; Neu5Ac) to form pyruvate and N-acetylmannosamine (ManNAc) via a Schiff base intermediate. In Actinobacillus pleuropneumoniae serotype 5b (strain L20), this protein is N-acetylneuraminate lyase.